Here is a 549-residue protein sequence, read N- to C-terminus: CTP synthase (549 aa).

Positions 1 to 272 are amidoligase domain; sequence MPPKSSTTKH…DAYVVRRMDL (272 aa). Serine 19 is a CTP binding site. Residue serine 19 coordinates UTP. ATP-binding positions include 20–25 and aspartate 77; that span reads SLGKGL. Mg(2+)-binding residues include aspartate 77 and glutamate 146. CTP is bound by residues 153-155, 193-198, and lysine 229; these read DIE and KTKPTQ. UTP contacts are provided by residues 193-198 and lysine 229; that span reads KTKPTQ. Positions 301 to 548 constitute a Glutamine amidotransferase type-1 domain; sequence VGKYIDLPDA…VKAAVERKTS (248 aa). Position 360 (glycine 360) interacts with L-glutamine. Cysteine 387 functions as the Nucleophile; for glutamine hydrolysis in the catalytic mechanism. L-glutamine-binding positions include 388-391, glutamate 411, and arginine 473; that span reads LGLQ. Active-site residues include histidine 521 and glutamate 523.

Belongs to the CTP synthase family. In terms of assembly, homotetramer.

The enzyme catalyses UTP + L-glutamine + ATP + H2O = CTP + L-glutamate + ADP + phosphate + 2 H(+). The catalysed reaction is L-glutamine + H2O = L-glutamate + NH4(+). It catalyses the reaction UTP + NH4(+) + ATP = CTP + ADP + phosphate + 2 H(+). It participates in pyrimidine metabolism; CTP biosynthesis via de novo pathway; CTP from UDP: step 2/2. Its activity is regulated as follows. Allosterically activated by GTP, when glutamine is the substrate; GTP has no effect on the reaction when ammonia is the substrate. The allosteric effector GTP functions by stabilizing the protein conformation that binds the tetrahedral intermediate(s) formed during glutamine hydrolysis. Inhibited by the product CTP, via allosteric rather than competitive inhibition. In terms of biological role, catalyzes the ATP-dependent amination of UTP to CTP with either L-glutamine or ammonia as the source of nitrogen. Regulates intracellular CTP levels through interactions with the four ribonucleotide triphosphates. The protein is CTP synthase of Streptomyces coelicolor (strain ATCC BAA-471 / A3(2) / M145).